The chain runs to 55 residues: Large ribosomal subunit protein bL33 (55 aa).

It belongs to the bacterial ribosomal protein bL33 family.

The polypeptide is Large ribosomal subunit protein bL33 (Rhodospirillum centenum (strain ATCC 51521 / SW)).